Here is a 384-residue protein sequence, read N- to C-terminus: Involucrin (384 aa).

Positions 1-384 are disordered; the sequence is MSQQHTLPVT…LPEQPQEPEV (384 aa). Basic and acidic residues-rich tracts occupy residues 56 to 65 and 80 to 134; these read PSKHEEKGTD and PELH…ELHL. A compositionally biased stretch (low complexity) spans 137-146; it reads QQQQESQEQE. A compositionally biased stretch (basic and acidic residues) spans 179–208; that stretch reads KQREPQESQEQRLHLGKEQESQEQRLHLGE. Over residues 239–267 the composition is skewed to low complexity; sequence PEQRLQLLPQGPQEQELHLGKQQQQQESQ. 2 stretches are compositionally biased toward basic and acidic residues: residues 268–308 and 315–336; these read QHQE…KKLL and EAVK…KEQL.

This sequence belongs to the involucrin family. As to quaternary structure, directly or indirectly cross-linked to cornifelin (CNFN). Post-translationally, substrate of transglutaminase. Specific glutamines or lysines are cross-linked to keratins, desmoplakin and to inter involucrin molecules. As to expression, keratinocytes of epidermis and other stratified squamous epithelia.

It localises to the cytoplasm. Functionally, part of the insoluble cornified cell envelope (CE) of stratified squamous epithelia. This Otolemur crassicaudatus (Brown greater galago) protein is Involucrin (IVL).